A 42-amino-acid polypeptide reads, in one-letter code: Cytochrome b6-f complex subunit 7 (42 aa).

A helical membrane pass occupies residues 19–37 (AVVCFSMTLFGLSLGFGLL).

It belongs to the PetM family. As to quaternary structure, the 4 large subunits of the cytochrome b6-f complex are cytochrome b6, subunit IV (17 kDa polypeptide, PetD), cytochrome f and the Rieske protein, while the 4 small subunits are PetG, PetL, PetM and PetN. The complex functions as a dimer.

The protein localises to the plastid. Its subcellular location is the chloroplast thylakoid membrane. Its function is as follows. Component of the cytochrome b6-f complex, which mediates electron transfer between photosystem II (PSII) and photosystem I (PSI), cyclic electron flow around PSI, and state transitions. This is Cytochrome b6-f complex subunit 7 from Phaeodactylum tricornutum (strain CCAP 1055/1).